The following is a 201-amino-acid chain: Flagellin B1 (201 aa).

Positions 1 to 11 are excised as a propeptide; it reads MFEQNDDRDRG.

It belongs to the archaeal flagellin family.

It localises to the archaeal flagellum. In terms of biological role, flagellin is the subunit protein which polymerizes to form the filaments of archaeal flagella. The polypeptide is Flagellin B1 (flaB1) (Natrialba magadii (strain ATCC 43099 / DSM 3394 / CCM 3739 / CIP 104546 / IAM 13178 / JCM 8861 / NBRC 102185 / NCIMB 2190 / MS3) (Natronobacterium magadii)).